Here is a 739-residue protein sequence, read N- to C-terminus: MSEEISLSAEFIDRVKASVKPHWGKLGWVTYKRTYARWLPEKGRSENWDETVKRVVEGNINLDPRLQDSPSLELKQSLTEEAERLYKLIYGLGATPSGRNLWISGTDYQRRTGDSLNNCWFVAIRPQKYGDSKIVPSYLGKQEKAVSMPFSFLFDELMKGGGVGFSVARSNISQIPRVDFAIDLQLVVDETSESYDASVKVGAVGKNELVQDADSIYYRLPDTREGWVLANALLIDLHFAQTNPDRKQKLILDLSDIRPYGAEIHGFGGTASGPMPLISMLLDVNEVLNNKAGGRLTAVDAADICNLIGKAVVAGNVRRSAELALGSNDDQDFISMKQDQEKLMHHRWASNNSVAVDSAFSGYQPIAAGIRENGEPGIVNLDLSKNYGRIVDGYQAGIDGDVEGTNPCGEISLANGEPCNLFEVFPLIAEEQGWDLQEVFALAARYAKRVTFSPYDWEISREIIQKNRRIGISMSGIQDWLLTRLGNRVVTGFKDDFDPETHEAIKVPVYDKRAIKMVDQLYKAVVKADQDYSKTLGCNESIKHTTVKPSGTVAKLAGASEGMHFHYGAYLIQRIRFQDSDPLLPALKACGYRTEADIYTENTTCVEFPIKAVGADNPNFASAGTVSIAEQFATQAFLQTYWSDNAVSCTITFQDSEGDQVESLLRQYRFITKSTSLLPYFGGSLQQAPKEPIDKETYEKRSQEITGNVEEVFSQLNSDVKDLELVDQTDCEGGACPIK.

The cysteines at positions 119 and 419 are disulfide-linked. An effector region-1 region spans residues 147–158 (SMPFSFLFDELM). The effector region-2 stretch occupies residues 168-313 (ARSNISQIPR…ICNLIGKAVV (146 aa)). Residues Cys408 and Glu410 contribute to the active site. The tract at residues 565–626 (FHYGAYLIQR…NPNFASAGTV (62 aa)) is adenosylcobalamin-binding-1. The adenosylcobalamin-binding-2 stretch occupies residues 685–724 (LQQAPKEPIDKETYEKRSQEITGNVEEVFSQLNSDVKDLE).

Belongs to the class II ribonucleoside-triphosphate reductase family. In terms of assembly, monomer. It depends on adenosylcob(III)alamin as a cofactor.

The enzyme catalyses a 2'-deoxyribonucleoside 5'-triphosphate + [thioredoxin]-disulfide + H2O = a ribonucleoside 5'-triphosphate + [thioredoxin]-dithiol. With respect to regulation, allosterically regulated by ATP and dNTP. The polypeptide is Adenosylcobalamin-dependent ribonucleoside-triphosphate reductase (rtpR) (Lactobacillus leichmannii).